Consider the following 27-residue polypeptide: uncharacterized protein (27 aa).

This is an uncharacterized protein from Saccharomyces cerevisiae (strain ATCC 204508 / S288c) (Baker's yeast).